The primary structure comprises 226 residues: Cytidylate kinase (226 aa).

10 to 18 provides a ligand contact to ATP; it reads GPASSGKST.

It belongs to the cytidylate kinase family. Type 1 subfamily.

It is found in the cytoplasm. The catalysed reaction is CMP + ATP = CDP + ADP. The enzyme catalyses dCMP + ATP = dCDP + ADP. This chain is Cytidylate kinase, found in Streptococcus pyogenes serotype M5 (strain Manfredo).